Reading from the N-terminus, the 434-residue chain is Alpha-enolase (434 aa).

Residue serine 40 participates in Mg(2+) binding. Residues histidine 158 and glutamate 167 each coordinate substrate. Glutamate 210 functions as the Proton donor in the catalytic mechanism. The Mg(2+) site is built by aspartate 245, glutamate 293, and aspartate 318. Substrate is bound by residues glutamate 293 and aspartate 318. Lysine 343 acts as the Proton acceptor in catalysis. Substrate-binding positions include 370 to 373 (SHRS) and lysine 394.

The protein belongs to the enolase family. Homodimer. The cofactor is Mg(2+).

The protein localises to the cytoplasm. The catalysed reaction is (2R)-2-phosphoglycerate = phosphoenolpyruvate + H2O. It functions in the pathway carbohydrate degradation; glycolysis; pyruvate from D-glyceraldehyde 3-phosphate: step 4/5. The polypeptide is Alpha-enolase (Python regius (Ball python)).